The sequence spans 356 residues: 5-formaminoimidazole-4-carboxamide-1-(beta)-D-ribofuranosyl 5'-monophosphate synthetase (356 aa).

H27 and S94 together coordinate 5-amino-1-(5-phospho-beta-D-ribosyl)imidazole-4-carboxamide. The region spanning 101 to 333 (TENFAELTVP…YADLIQEDLS (233 aa)) is the ATP-grasp domain. ATP is bound by residues 145–196 (PRDI…TRYY) and E226. N255 provides a ligand contact to 5-amino-1-(5-phospho-beta-D-ribosyl)imidazole-4-carboxamide. 2 residues coordinate Mg(2+): E293 and E306.

It belongs to the phosphohexose mutase family. Requires Mg(2+) as cofactor. The cofactor is Mn(2+).

It carries out the reaction 5-amino-1-(5-phospho-beta-D-ribosyl)imidazole-4-carboxamide + formate + ATP = 5-formamido-1-(5-phospho-D-ribosyl)imidazole-4-carboxamide + ADP + phosphate. Its pathway is purine metabolism; IMP biosynthesis via de novo pathway; 5-formamido-1-(5-phospho-D-ribosyl)imidazole-4-carboxamide from 5-amino-1-(5-phospho-D-ribosyl)imidazole-4-carboxamide (formate route): step 1/1. Catalyzes the ATP- and formate-dependent formylation of 5-aminoimidazole-4-carboxamide-1-beta-d-ribofuranosyl 5'-monophosphate (AICAR) to 5-formaminoimidazole-4-carboxamide-1-beta-d-ribofuranosyl 5'-monophosphate (FAICAR) in the absence of folates. This Methanosarcina acetivorans (strain ATCC 35395 / DSM 2834 / JCM 12185 / C2A) protein is 5-formaminoimidazole-4-carboxamide-1-(beta)-D-ribofuranosyl 5'-monophosphate synthetase.